The sequence spans 160 residues: uncharacterized protein (160 aa).

An N-terminal signal peptide occupies residues 1–18 (MELLSLAILSSFFAVANQ).

This is an uncharacterized protein from Caenorhabditis elegans.